The primary structure comprises 87 residues: Putative septation protein SpoVG (87 aa).

It belongs to the SpoVG family.

Its function is as follows. Could be involved in septation. In Agathobacter rectalis (strain ATCC 33656 / DSM 3377 / JCM 17463 / KCTC 5835 / VPI 0990) (Eubacterium rectale), this protein is Putative septation protein SpoVG.